Reading from the N-terminus, the 1067-residue chain is UPF0507 protein KLLA0D01133g (1067 aa).

The region spanning 280–432 is the VPS9 domain; that stretch reads IVEDQELEHR…FHQDTVDSLT (153 aa).

Belongs to the UPF0507 family.

This is UPF0507 protein KLLA0D01133g from Kluyveromyces lactis (strain ATCC 8585 / CBS 2359 / DSM 70799 / NBRC 1267 / NRRL Y-1140 / WM37) (Yeast).